Here is a 483-residue protein sequence, read N- to C-terminus: Cyclic AMP-dependent transcription factor ATF-7 (483 aa).

Positions Met-1–Met-285 are transactivation domain. The segment at Phe-7–His-31 adopts a C2H2-type zinc-finger fold. A Phosphothreonine; by MAPK11 modification is found at Thr-51. Phosphothreonine occurs at positions 53 and 101. Residue Lys-107 forms a Glycyl lysine isopeptide (Lys-Gly) (interchain with G-Cter in SUMO1) linkage. Disordered regions lie at residues Glu-110–Pro-148 and His-299–Ala-345. Composition is skewed to low complexity over residues Val-114–Pro-126 and Gln-307–Gly-320. The essential for binding adenovirus 2 E1A stretch occupies residues Arg-325–Arg-483. Residues Thr-326 to Arg-343 show a composition bias toward basic and acidic residues. The region spanning Asp-332–His-395 is the bZIP domain. The interval Arg-334–Lys-354 is basic motif. The interval Leu-360–Leu-388 is leucine-zipper. The disordered stretch occupies residues Thr-407–Gly-439. Phosphoserine occurs at positions 413 and 423. Polar residues predominate over residues Gln-429–Gly-439.

It belongs to the bZIP family. Homodimer; binds DNA as homodimer. Heterodimer; heterodimerizes with other members of ATF family and with JUN family members. Interacts with JNK2; the interaction does not phosphorylate ATF7 but acts as a docking site for other ATF-associated partners such as JUN family members. Interacts (via its transactivation domain) with TAF12 (isoforms TAFII15 and TAFII20); the interaction potentiates the transactivation activity (isoform TAFII20 only) and is inhibited by ATF7 sumoylation. Interacts with TAF4; the interaction inhibits the TAF12-dependent transactivation. Interacts with MAPK9; the interaction does not phosphorylate ATF7 but acts as a docking site for ATF7-associated partners such as JUN. Interacts with Ku complex components XRCC6 and XRCC7. Interacts with TERT. In terms of assembly, (Microbial infection) Interacts with adenovirus 2 E1A; the interaction enhances the ATF7-mediated viral transactivation activity which requires the zinc-binding domains of both E1A and ATF7. On EGF stimulation, phosphorylated first on Thr-53 allowing subsequent phosphorylation on Thr-51. This latter phosphorylation prevents sumoylation, increases binding to TAF12 and enhances transcriptional activity. Post-translationally, sumoylation delays nuclear localization and inhibits transactivation activity through preventing binding to TAF12. RANBP2 appears to be the specific E3 ligase. In terms of processing, on EGF stimulation, phosphorylated first on Thr-53 allowing subsequent phosphorylation on Thr-51. This latter phosphorylation prevents sumoylation, increases binding to TAF12 and enhances transcriptional activity. Social isolation stress as well as TNF-alpha also induce the phosphorylation of ATF7. Phosphorylated in proliferating colonic and small intestinal epithelial cells. Expressed in various tissues including heart, brain, placenta, lung and skeletal muscle. Highest levels in skeletal muscle. Lowest in lung and placenta. As to expression, strongly expressed in skeletal muscle. Also expressed at lower levels in heart and lung.

It is found in the nucleus. The protein resides in the nucleoplasm. The protein localises to the chromosome. Its subcellular location is the telomere. It localises to the cytoplasm. Stress-responsive chromatin regulator that plays a role in various biological processes including innate immunological memory, adipocyte differentiation or telomerase regulation. In absence of stress, contributes to the formation of heterochromatin and heterochromatin-like structure by recruiting histone H3K9 tri- and di-methyltransferases thus silencing the transcription of target genes such as STAT1 in adipocytes, or genes involved in innate immunity in macrophages and adipocytes. Stress induces ATF7 phosphorylation that disrupts interactions with histone methyltransferase and enhances the association with coactivators containing histone acetyltransferase and/or histone demethylase, leading to disruption of the heterochromatin-like structure and subsequently transcriptional activation. In response to TNF-alpha, which is induced by various stresses, phosphorylated ATF7 and telomerase are released from telomeres leading to telomere shortening. Also plays a role in maintaining epithelial regenerative capacity and protecting against cell death during intestinal epithelial damage and repair. Functionally, acts as a dominant repressor of the E-selectin/NF-ELAM1/delta-A promoter. Its function is as follows. Acts as a negative regulator, inhibiting both ATF2 and ATF7 transcriptional activities. It may exert these effects by sequestrating in the cytoplasm the Thr-53 phosphorylating kinase, preventing activation. The sequence is that of Cyclic AMP-dependent transcription factor ATF-7 (ATF7) from Homo sapiens (Human).